The primary structure comprises 201 residues: Charged multivesicular body protein 6 (201 aa).

Residue G2 is the site of N-myristoyl glycine attachment. Residues 10–145 (QSRVTEQDKA…YQRQIDELLA (136 aa)) adopt a coiled-coil conformation. A Phosphoserine modification is found at S119. T130 carries the phosphothreonine modification. The Type-2 MIT-interacting motif signature appears at 168–179 (IELPEVPSEPLP). The disordered stretch occupies residues 171–201 (PEVPSEPLPEKIPEDVPVKARPRQAELVAAS). The span at 178 to 188 (LPEKIPEDVPV) shows a compositional bias: basic and acidic residues.

It belongs to the SNF7 family. In terms of assembly, probable core component of the endosomal sorting required for transport complex III (ESCRT-III). ESCRT-III components are thought to multimerize to form a flat lattice on the perimeter membrane of the endosome. Several assembly forms of ESCRT-III may exist that interact and act sequentially. Interacts with VPS4A; the interaction is direct. Interacts with VPS4B; the interaction is direct. Interacts with CHMP4A, CHMP4B and CHMP4C. Interacts with SNF8, VPS25 and VPS36. Post-translationally, ISGylated in a CHMP5-dependent manner. Isgylation weakens its interaction with VPS4A.

The protein resides in the endomembrane system. It is found in the endosome membrane. The protein localises to the late endosome membrane. It localises to the membrane. In terms of biological role, probable core component of the endosomal sorting required for transport complex III (ESCRT-III) which is involved in multivesicular bodies (MVBs) formation and sorting of endosomal cargo proteins into MVBs. MVBs contain intraluminal vesicles (ILVs) that are generated by invagination and scission from the limiting membrane of the endosome and mostly are delivered to lysosomes enabling degradation of membrane proteins, such as stimulated growth factor receptors, lysosomal enzymes and lipids. The MVB pathway appears to require the sequential function of ESCRT-O, -I,-II and -III complexes. ESCRT-III proteins mostly dissociate from the invaginating membrane before the ILV is released. The ESCRT machinery also functions in topologically equivalent membrane fission events, such as the terminal stages of cytokinesis and the budding of enveloped viruses (lentiviruses). ESCRT-III proteins are believed to mediate the necessary vesicle extrusion and/or membrane fission activities, possibly in conjunction with the AAA ATPase VPS4. In the ESCRT-III complex, it probably serves as an acceptor for the ESCRT-II complex on endosomal membrane. This Pongo abelii (Sumatran orangutan) protein is Charged multivesicular body protein 6 (CHMP6).